The primary structure comprises 266 residues: Putative carbamate hydrolase RutD (266 aa).

It belongs to the AB hydrolase superfamily. Hydrolase RutD family.

The enzyme catalyses carbamate + 2 H(+) = NH4(+) + CO2. Involved in pyrimidine catabolism. May facilitate the hydrolysis of carbamate, a reaction that can also occur spontaneously. The chain is Putative carbamate hydrolase RutD from Acinetobacter baylyi (strain ATCC 33305 / BD413 / ADP1).